Here is a 585-residue protein sequence, read N- to C-terminus: Protein FAM83D (585 aa).

Residues 1-296 form a DUF1669 region; that stretch reads MAARFELLDD…LYAQSEPISS (296 aa). Ser295 is subject to Phosphoserine. Disordered stretches follow at residues 334 to 411 and 425 to 482; these read LSST…TSSS and AASS…SQGS. The tract at residues 337 to 585 is required for interaction with KIF22 and function in chromosome congression; that stretch reads TPRKSNLGPE…RDIALYPPYQ (249 aa). Basic and acidic residues-rich tracts occupy residues 347–360 and 369–383; these read EPPK…RPDS and DYFH…DSKV. Polar residues predominate over residues 425-441; the sequence is AASSQATVWSKSTTTQT. Position 458 is a phosphoserine (Ser458). Positions 458–482 are enriched in low complexity; sequence SPASKMSVSRSSSVRSSSSVSSQGS. A Phosphothreonine modification is found at Thr511.

Belongs to the FAM83 family. Interacts with FBXW7; promotes FBXW7 degradation. May interact with RAF1. Interacts with KIF22; recruits KIF22 to mitotic spindle microtubules. Interacts (via C-terminus) with DYNLL1. Interacts with HMMR. Directly interacts (via DUF1669) with CSNK1A1 and CSNK1A1L. Phosphorylated during mitosis.

The protein resides in the cytoplasm. Its subcellular location is the cytoskeleton. It localises to the spindle. The protein localises to the spindle pole. Its function is as follows. Through the degradation of FBXW7, may act indirectly on the expression and downstream signaling of MTOR, JUN and MYC. May play also a role in cell proliferation through activation of the ERK1/ERK2 signaling cascade. May also be important for proper chromosome congression and alignment during mitosis through its interaction with KIF22. In Mus musculus (Mouse), this protein is Protein FAM83D.